Consider the following 82-residue polypeptide: Ice-structuring protein A (82 aa).

The N-terminal stretch at 1-23 (MALSLFTVGQLIFLFWTMRITEA) is a signal peptide. A propeptide spans 24-44 (SPDPAAKAAPAAAAAPAAAAP) (removed by a dipeptidylpeptidase). Arg-81 carries the post-translational modification Arginine amide.

This sequence belongs to the type-I AFP family. Detected in liver and in blood serum (at protein level).

The protein localises to the secreted. Functionally, contributes to protect fish blood from freezing at subzero sea water temperatures. Lowers the blood freezing point. Binds to nascent ice crystals and prevents further growth. This chain is Ice-structuring protein A, found in Pseudopleuronectes americanus (Winter flounder).